Reading from the N-terminus, the 282-residue chain is HTH-type transcriptional activator RhaR (282 aa).

In terms of domain architecture, HTH araC/xylS-type spans D179–L277. 2 DNA-binding regions (H-T-H motif) span residues D196–T217 and I244–T267.

In terms of assembly, binds DNA as a dimer.

The protein resides in the cytoplasm. Its function is as follows. Activates expression of the rhaSR operon in response to L-rhamnose. This Escherichia coli (strain K12 / MC4100 / BW2952) protein is HTH-type transcriptional activator RhaR.